We begin with the raw amino-acid sequence, 193 residues long: Potassium-transporting ATPase KdpC subunit (193 aa).

Residues 9 to 29 (VLMTVVTTVLLGLVYPLLITG) traverse the membrane as a helical segment.

The protein belongs to the KdpC family. As to quaternary structure, the system is composed of three essential subunits: KdpA, KdpB and KdpC.

Its subcellular location is the cell inner membrane. Functionally, part of the high-affinity ATP-driven potassium transport (or Kdp) system, which catalyzes the hydrolysis of ATP coupled with the electrogenic transport of potassium into the cytoplasm. This subunit acts as a catalytic chaperone that increases the ATP-binding affinity of the ATP-hydrolyzing subunit KdpB by the formation of a transient KdpB/KdpC/ATP ternary complex. The polypeptide is Potassium-transporting ATPase KdpC subunit (Koribacter versatilis (strain Ellin345)).